Consider the following 381-residue polypeptide: Queuine tRNA-ribosyltransferase (381 aa).

The active-site Proton acceptor is aspartate 92. Substrate is bound by residues 92–96 (DSGGF), aspartate 146, glutamine 190, and glycine 217. The RNA binding stretch occupies residues 248 to 254 (GVGRPED). Aspartate 267 (nucleophile) is an active-site residue. Residues 272 to 276 (TRNAR) form an RNA binding; important for wobble base 34 recognition region. Residues cysteine 305, cysteine 307, cysteine 310, and histidine 337 each coordinate Zn(2+).

The protein belongs to the queuine tRNA-ribosyltransferase family. As to quaternary structure, homodimer. Within each dimer, one monomer is responsible for RNA recognition and catalysis, while the other monomer binds to the replacement base PreQ1. Zn(2+) is required as a cofactor.

The enzyme catalyses 7-aminomethyl-7-carbaguanine + guanosine(34) in tRNA = 7-aminomethyl-7-carbaguanosine(34) in tRNA + guanine. Its pathway is tRNA modification; tRNA-queuosine biosynthesis. Functionally, catalyzes the base-exchange of a guanine (G) residue with the queuine precursor 7-aminomethyl-7-deazaguanine (PreQ1) at position 34 (anticodon wobble position) in tRNAs with GU(N) anticodons (tRNA-Asp, -Asn, -His and -Tyr). Catalysis occurs through a double-displacement mechanism. The nucleophile active site attacks the C1' of nucleotide 34 to detach the guanine base from the RNA, forming a covalent enzyme-RNA intermediate. The proton acceptor active site deprotonates the incoming PreQ1, allowing a nucleophilic attack on the C1' of the ribose to form the product. After dissociation, two additional enzymatic reactions on the tRNA convert PreQ1 to queuine (Q), resulting in the hypermodified nucleoside queuosine (7-(((4,5-cis-dihydroxy-2-cyclopenten-1-yl)amino)methyl)-7-deazaguanosine). The chain is Queuine tRNA-ribosyltransferase from Xanthomonas campestris pv. campestris (strain B100).